Reading from the N-terminus, the 527-residue chain is Bifunctional purine biosynthesis protein PurH (527 aa).

In terms of domain architecture, MGS-like spans 1 to 149 (MASDFLPVRR…KNFARVAVAT (149 aa)).

The protein belongs to the PurH family.

It carries out the reaction (6R)-10-formyltetrahydrofolate + 5-amino-1-(5-phospho-beta-D-ribosyl)imidazole-4-carboxamide = 5-formamido-1-(5-phospho-D-ribosyl)imidazole-4-carboxamide + (6S)-5,6,7,8-tetrahydrofolate. The catalysed reaction is IMP + H2O = 5-formamido-1-(5-phospho-D-ribosyl)imidazole-4-carboxamide. It participates in purine metabolism; IMP biosynthesis via de novo pathway; 5-formamido-1-(5-phospho-D-ribosyl)imidazole-4-carboxamide from 5-amino-1-(5-phospho-D-ribosyl)imidazole-4-carboxamide (10-formyl THF route): step 1/1. The protein operates within purine metabolism; IMP biosynthesis via de novo pathway; IMP from 5-formamido-1-(5-phospho-D-ribosyl)imidazole-4-carboxamide: step 1/1. In Xanthomonas oryzae pv. oryzae (strain MAFF 311018), this protein is Bifunctional purine biosynthesis protein PurH.